The chain runs to 1352 residues: Inhibitor of Bruton tyrosine kinase (1352 aa).

ANK repeat units follow at residues 51-80 and 85-114; these read FGRNAGHLASSCGKKGVLDWLIEKGVDLLV and SGWTALHRSVFYGHIDCVWSLLKHGVSLYM. RCC1 repeat units follow at residues 141-194, 195-246, and 248-301; these read PTEV…FLSQ, KGQV…VLTD, and GCVY…LWTR. The BTB 1 domain maps to 565-645; sequence HDVTFQVGNR…MYTDTCDLLT (81 aa). Residues 692-716 are disordered; sequence AHTLSERQKSKPKSSKKGKGVGDDD. The segment covering 701–710 has biased composition (basic residues); the sequence is SKPKSSKKGK. The BTB 2 domain maps to 769–837; that stretch reads YDVTMKSVDG…LYTDEAVVIK (69 aa). The tract at residues 976-1002 is disordered; the sequence is FKKAKTRAKKKPRKRSDSSGGYTLSDV. Basic residues predominate over residues 977 to 989; it reads KKAKTRAKKKPRK. Serine 991 carries the phosphoserine modification. The segment covering 993–1002 has biased composition (polar residues); that stretch reads SSGGYTLSDV. A phosphoserine mark is found at serine 1005, serine 1031, serine 1034, serine 1040, serine 1046, serine 1055, serine 1084, serine 1111, serine 1113, and serine 1116. The tract at residues 1032 to 1094 is disordered; sequence EGSYAGVASP…PTTKSAPQFI (63 aa). The span at 1084–1094 shows a compositional bias: polar residues; the sequence is SPTTKSAPQFI.

Interacts with the PH domain of BTK.

The protein localises to the cytoplasm. The protein resides in the membrane. Acts as an inhibitor of BTK tyrosine kinase activity, thereby playing a role in B-cell development. Down-regulates BTK kinase activity, leading to interference with BTK-mediated calcium mobilization and NF-kappa-B-driven transcription. This is Inhibitor of Bruton tyrosine kinase (Ibtk) from Mus musculus (Mouse).